The chain runs to 397 residues: UPF0761 membrane protein Kkor_1635 (397 aa).

6 helical membrane passes run 36 to 56 (MLAL…FPSF), 92 to 112 (NLSA…MRSI), 132 to 152 (ILAY…SLAA), 168 to 188 (ILTF…LYMV), 201 to 221 (IAAV…AIFV), and 237 to 257 (IPIF…GVIV).

Belongs to the UPF0761 family.

It is found in the cell inner membrane. In Kangiella koreensis (strain DSM 16069 / JCM 12317 / KCTC 12182 / SW-125), this protein is UPF0761 membrane protein Kkor_1635.